The sequence spans 357 residues: Protein FAM118A (357 aa).

Position 1 is an N-acetylmethionine (methionine 1). The helical transmembrane segment at 30 to 46 (LLLVIGTGVSAAVAPGI) threads the bilayer. Position 311 is a phosphoserine (serine 311).

It belongs to the FAM118 family.

The protein resides in the membrane. This is Protein FAM118A (Fam118a) from Mus musculus (Mouse).